The following is a 70-amino-acid chain: NAD(P)H-quinone oxidoreductase subunit O (70 aa).

The protein belongs to the complex I NdhO subunit family. NDH-1 can be composed of about 15 different subunits; different subcomplexes with different compositions have been identified which probably have different functions.

The protein resides in the cellular thylakoid membrane. It catalyses the reaction a plastoquinone + NADH + (n+1) H(+)(in) = a plastoquinol + NAD(+) + n H(+)(out). The catalysed reaction is a plastoquinone + NADPH + (n+1) H(+)(in) = a plastoquinol + NADP(+) + n H(+)(out). NDH-1 shuttles electrons from an unknown electron donor, via FMN and iron-sulfur (Fe-S) centers, to quinones in the respiratory and/or the photosynthetic chain. The immediate electron acceptor for the enzyme in this species is believed to be plastoquinone. Couples the redox reaction to proton translocation, and thus conserves the redox energy in a proton gradient. Cyanobacterial NDH-1 also plays a role in inorganic carbon-concentration. This is NAD(P)H-quinone oxidoreductase subunit O from Nostoc sp. (strain PCC 7120 / SAG 25.82 / UTEX 2576).